Consider the following 477-residue polypeptide: Zinc metalloproteinase/disintegrin (477 aa).

Residues 1–19 (MIQVLLVIICLAVPYQGSS) form the signal peptide. The propeptide occupies 20–186 (IILESGNVND…PIKKASQSNL (167 aa)). A Peptidase M12B domain is found at 192 to 388 (RYIELVIVAD…QKPQCILNKP (197 aa)). Ca(2+) contacts are provided by glutamate 195 and aspartate 279. Cystine bridges form between cysteine 303/cysteine 383, cysteine 343/cysteine 367, and cysteine 345/cysteine 350. Histidine 328 is a Zn(2+) binding site. The active site involves glutamate 329. 2 residues coordinate Zn(2+): histidine 332 and histidine 338. Residues cysteine 383 and asparagine 386 each coordinate Ca(2+). Residues 389–404 (LRTDTVSTPVSGNELL) constitute a propeptide that is removed on maturation. The region spanning 396–477 (TPVSGNELLE…AGCPRNPFHA (82 aa)) is the Disintegrin domain. 6 disulfides stabilise this stretch: cysteine 410–cysteine 425, cysteine 412–cysteine 420, cysteine 419–cysteine 442, cysteine 433–cysteine 439, cysteine 438–cysteine 463, and cysteine 451–cysteine 470. The Cell attachment site signature appears at 455–457 (RGD).

It belongs to the venom metalloproteinase (M12B) family. P-II subfamily. P-IIa sub-subfamily. As to quaternary structure, monomer. Requires Zn(2+) as cofactor. Expressed by the venom gland.

It localises to the secreted. Impairs hemostasis in the envenomed animal. Functionally, inhibits platelet aggregation induced by ADP, thrombin, platelet-activating factor and collagen. Acts by inhibiting fibrinogen interaction with platelet receptors GPIIb/GPIIIa (ITGA2B/ITGB3). This Gloydius halys (Chinese water mocassin) protein is Zinc metalloproteinase/disintegrin.